Here is a 783-residue protein sequence, read N- to C-terminus: Protein SCARECROW (783 aa).

The segment at 298 to 387 is disordered; the sequence is QPQSQDAITH…QSPPASENTA (90 aa). 2 stretches are compositionally biased toward low complexity: residues 342–353 and 372–384; these read PSSLPFVPVPSS and ESQS…PASE. Residues 387-418 adopt a coiled-coil conformation; sequence AAAALIRTESIMRREKEELEQQKKDEEGLHLL. Residues 408–777 enclose the GRAS domain; sequence QKKDEEGLHL…LCLLTASAWR (370 aa). Residues 415–478 are leucine repeat I (LRI); it reads LHLLTLLLQC…LVNSCLGIYA (64 aa). Residues 422-426 carry the LxCxE motif motif; it reads LQCAE. Residues 497 to 562 form a VHIID region; the sequence is FQVFNGISPF…GGPPLVRLTG (66 aa). The VHIID signature appears at 528–532; sequence VHIID. The leucine repeat II (LRII) stretch occupies residues 572-604; sequence ATGKRLSDFAQKLGLPFEFFPVADKVGNLDPQR. A PFYRE region spans residues 613 to 700; that stretch reads VAVHWLQHSL…QQLLSREIRN (88 aa). Residues 703 to 777 form an SAW region; sequence AVGGPSRSGE…LCLLTASAWR (75 aa).

It belongs to the GRAS family.

Its subcellular location is the nucleus. Putative transcription factor involved in asymmetric cell division. Required for differentiation of endodermis and graviresponses. The chain is Protein SCARECROW (SCR) from Ipomoea nil (Japanese morning glory).